The following is a 35-amino-acid chain: 5'-methylthioadenosine/S-adenosylhomocysteine nucleosidase (35 aa).

Glu12 acts as the Proton acceptor in catalysis.

This sequence belongs to the PNP/UDP phosphorylase family. MtnN subfamily. As to quaternary structure, homodimer.

It carries out the reaction S-adenosyl-L-homocysteine + H2O = S-(5-deoxy-D-ribos-5-yl)-L-homocysteine + adenine. The enzyme catalyses S-methyl-5'-thioadenosine + H2O = 5-(methylsulfanyl)-D-ribose + adenine. It catalyses the reaction 5'-deoxyadenosine + H2O = 5-deoxy-D-ribose + adenine. Its pathway is amino-acid biosynthesis; L-methionine biosynthesis via salvage pathway; S-methyl-5-thio-alpha-D-ribose 1-phosphate from S-methyl-5'-thioadenosine (hydrolase route): step 1/2. Catalyzes the irreversible cleavage of the glycosidic bond in both 5'-methylthioadenosine (MTA) and S-adenosylhomocysteine (SAH/AdoHcy) to adenine and the corresponding thioribose, 5'-methylthioribose and S-ribosylhomocysteine, respectively. Also cleaves 5'-deoxyadenosine, a toxic by-product of radical S-adenosylmethionine (SAM) enzymes, into 5-deoxyribose and adenine. Thus, is required for in vivo function of the radical SAM enzymes biotin synthase and lipoic acid synthase, that are inhibited by 5'-deoxyadenosine accumulation. The sequence is that of 5'-methylthioadenosine/S-adenosylhomocysteine nucleosidase (mtnN) from Klebsiella pneumoniae.